The sequence spans 130 residues: Small ribosomal subunit protein uS11 (130 aa).

This sequence belongs to the universal ribosomal protein uS11 family. Part of the 30S ribosomal subunit. Interacts with proteins S7 and S18. Binds to IF-3.

Located on the platform of the 30S subunit, it bridges several disparate RNA helices of the 16S rRNA. Forms part of the Shine-Dalgarno cleft in the 70S ribosome. This chain is Small ribosomal subunit protein uS11, found in Shewanella halifaxensis (strain HAW-EB4).